Reading from the N-terminus, the 349-residue chain is MSASKMAMSNLEKILELVPLSPTSFVTKYLPAAPVGSKGTFGGTLVSQSLLASLHTVPLNFFPTSLHSYFIKGGDPRTKITYHVQNLRNGRNFIHKQVSAYQHDKLIFTSMILFAVQRSKEHDSLQHWETIPGLQGKQPDPHRYEEATSLFQKEVLDPQKLSRYASLSDRFQDATSMSKYVDAFQYGVMEYQFPKDMFYSARHTDELDYFVKVRPPITTVEHAGDESSLHKHHPYRIPKSITPENDARYNYVAFAYLSDSYLLLTIPYFHNLPLYCHSFSVSLDHTIYFHQLPHVNNWIYLKISNPRSHWDKHLVQGKYFDTQSGRIMASVSQEGYVVYGSERDIRAKF.

Active-site charge relay system residues include Asp259, Ser282, and Gln333. The short motif at 347–349 (AKF) is the Microbody targeting signal element.

This sequence belongs to the C/M/P thioester hydrolase family.

The protein resides in the peroxisome. It carries out the reaction hexadecanoyl-CoA + H2O = hexadecanoate + CoA + H(+). Its function is as follows. Acyl-coenzyme A (acyl-CoA) thioesterases are a group of enzymes that catalyze the hydrolysis of acyl-CoAs to the free fatty acid and coenzyme A (CoASH), providing the potential to regulate intracellular levels of acyl-CoAs, free fatty acids and CoASH. Contributes to growth on fatty acids. In Saccharomyces cerevisiae (strain ATCC 204508 / S288c) (Baker's yeast), this protein is Peroxisomal acyl-coenzyme A thioester hydrolase 1 (TES1).